The chain runs to 708 residues: Protein psiF (708 aa).

Positions 1-19 are cleaved as a signal peptide; sequence MKYLFIAIILILYCSFTKA. Residues 20-643 lie on the Extracellular side of the membrane; it reads DQKKFLVNMY…QSTAVKVGVG (624 aa). Residues asparagine 78, asparagine 116, asparagine 222, asparagine 317, asparagine 318, asparagine 371, asparagine 498, and asparagine 600 are each glycosylated (N-linked (GlcNAc...) asparagine). One can recognise a PA14 domain in the interval 103–263; the sequence is TQTAGSQNYY…YDYCGICNGK (161 aa). A helical membrane pass occupies residues 644-664; it reads IGAAAAAGIAIGGAVAAGLAI. Residues 665–708 lie on the Cytoplasmic side of the membrane; it reads FGGKKAYDTWKTSRGNVMTGSQSNPLYTQNQNNGNNPLYSAPAE. The segment covering 682–702 has biased composition (polar residues); it reads MTGSQSNPLYTQNQNNGNNPL. The disordered stretch occupies residues 682–708; it reads MTGSQSNPLYTQNQNNGNNPLYSAPAE.

The protein belongs to the prespore-cell-inducing factor family. In terms of assembly, forms a complex with dicB.

The protein resides in the membrane. It localises to the secreted. In terms of biological role, acts as a quorum sensing protein regulating discoidin gene expression during growth and development. D.discoideum is a single-celled amoebae and switches to multicellular development when food becomes limited. As the growing cells reach a high density, they begin expressing discoidin genes. The ability of psiF/dicA to induce discoidin gene expression when present in conditioned medium, suggests that it allows cells to sense their local density. The chain is Protein psiF (psiF) from Dictyostelium discoideum (Social amoeba).